The sequence spans 131 residues: Small ribosomal subunit protein uS8 (131 aa).

The protein belongs to the universal ribosomal protein uS8 family. In terms of assembly, part of the 30S ribosomal subunit. Contacts proteins S5 and S12.

Its function is as follows. One of the primary rRNA binding proteins, it binds directly to 16S rRNA central domain where it helps coordinate assembly of the platform of the 30S subunit. The protein is Small ribosomal subunit protein uS8 of Halorhodospira halophila (strain DSM 244 / SL1) (Ectothiorhodospira halophila (strain DSM 244 / SL1)).